A 276-amino-acid polypeptide reads, in one-letter code: MRYCAFRLGLFFIGYSCCVLLSTPTLASSLEKSDAESTQTEQWNSNGKRILEADDPKLSLEGERGITPEVVPAFEAIGKAKTPEKAVPRMSLRSKLNPVNWAKGLWFKLRQLRARYRAWRLRRIIADKRGLGPALLNGLTPLHVKNVKDETIRYSKFGPDAINQIEKDYDSFVKLYFAQFDGLHKDPPIVKMDILDKMVKEMSSIERLAVRTSLDRVRLTVDAGYSFEKLISLDVSPLLYMRLLDAEGAFSDVDKNRDAINHLKGYVKAYYKHITL.

The signal sequence occupies residues 1–27; it reads MRYCAFRLGLFFIGYSCCVLLSTPTLA. Residues 110-113 carry the RxLR motif; it reads RQLR.

This sequence belongs to the RxLR effector family.

It is found in the secreted. The protein resides in the host cell membrane. Functionally, secreted effector that partially suppresses the host cell death induced by cell death-inducing proteins. This Plasmopara viticola (Downy mildew of grapevine) protein is Secreted RxLR effector protein 85.